A 263-amino-acid polypeptide reads, in one-letter code: Small ribosomal subunit protein uS2 (263 aa).

S2 carries the N-acetylserine modification. Over residues 211–242 (EQTAEEEAEAAEGAEFEVEEEEVEQEWQEPAE) the composition is skewed to acidic residues. Positions 211–263 (EQTAEEEAEAAEGAEFEVEEEEVEQEWQEPAEADWNASAPPADWNDAANAEAF) are disordered. Over residues 246–263 (NASAPPADWNDAANAEAF) the composition is skewed to low complexity.

This sequence belongs to the universal ribosomal protein uS2 family. In terms of assembly, component of the small ribosomal subunit. Mature ribosomes consist of a small (40S) and a large (60S) subunit. The 40S subunit contains about 33 different proteins and 1 molecule of RNA (18S). The 60S subunit contains about 49 different proteins and 3 molecules of RNA (25S, 5.8S and 5S). Interacts with RPS21.

It is found in the cytoplasm. In terms of biological role, required for the assembly and/or stability of the 40S ribosomal subunit. Required for the processing of the 20S rRNA-precursor to mature 18S rRNA in a late step of the maturation of 40S ribosomal subunits. In Komagataella phaffii (strain GS115 / ATCC 20864) (Yeast), this protein is Small ribosomal subunit protein uS2.